The following is a 256-amino-acid chain: 3-dehydroquinate dehydratase (256 aa).

3-dehydroquinate is bound by residues 46–48 (EWR) and arginine 82. Catalysis depends on histidine 144, which acts as the Proton donor/acceptor. The active-site Schiff-base intermediate with substrate is lysine 171. Residues arginine 213, serine 232, and glutamine 236 each coordinate 3-dehydroquinate.

Belongs to the type-I 3-dehydroquinase family. Homodimer.

The catalysed reaction is 3-dehydroquinate = 3-dehydroshikimate + H2O. The protein operates within metabolic intermediate biosynthesis; chorismate biosynthesis; chorismate from D-erythrose 4-phosphate and phosphoenolpyruvate: step 3/7. Involved in the third step of the chorismate pathway, which leads to the biosynthesis of aromatic amino acids. Catalyzes the cis-dehydration of 3-dehydroquinate (DHQ) and introduces the first double bond of the aromatic ring to yield 3-dehydroshikimate. The sequence is that of 3-dehydroquinate dehydratase from Shouchella clausii (strain KSM-K16) (Alkalihalobacillus clausii).